A 520-amino-acid chain; its full sequence is Succinyl-CoA:3-ketoacid coenzyme A transferase 2A, mitochondrial (520 aa).

A mitochondrion-targeting transit peptide spans 1-39; that stretch reads MAALRLLAWALPRGVSALRPPPALPHRLIRRYVSDRSGS. Positions 280–299 are disordered; the sequence is ERLTTRDSKPAPGSKDNDPS. The active-site 5-glutamyl coenzyme A thioester intermediate is the Glu342.

It belongs to the 3-oxoacid CoA-transferase family. Homodimer.

The protein resides in the mitochondrion. It catalyses the reaction a 3-oxo acid + succinyl-CoA = a 3-oxoacyl-CoA + succinate. It participates in ketone metabolism; succinyl-CoA degradation; acetoacetyl-CoA from succinyl-CoA: step 1/1. In terms of biological role, key enzyme for ketone body catabolism. Transfers the CoA moiety from succinate to acetoacetate. Formation of the enzyme-CoA intermediate proceeds via an unstable anhydride species formed between the carboxylate groups of the enzyme and substrate. Probably play and important roles in the energy metabolism of spermatozoa. This is Succinyl-CoA:3-ketoacid coenzyme A transferase 2A, mitochondrial (Oxct2a) from Mus musculus (Mouse).